We begin with the raw amino-acid sequence, 345 residues long: tRNA dimethylallyltransferase (345 aa).

Glycine 9 to serine 16 contacts ATP. Threonine 11–serine 16 lines the substrate pocket. Interaction with substrate tRNA regions lie at residues aspartate 34–glutamine 37 and glutamine 195–arginine 199.

This sequence belongs to the IPP transferase family. As to quaternary structure, monomer. Requires Mg(2+) as cofactor.

It carries out the reaction adenosine(37) in tRNA + dimethylallyl diphosphate = N(6)-dimethylallyladenosine(37) in tRNA + diphosphate. Its function is as follows. Catalyzes the transfer of a dimethylallyl group onto the adenine at position 37 in tRNAs that read codons beginning with uridine, leading to the formation of N6-(dimethylallyl)adenosine (i(6)A). The polypeptide is tRNA dimethylallyltransferase (Orientia tsutsugamushi (strain Boryong) (Rickettsia tsutsugamushi)).